We begin with the raw amino-acid sequence, 372 residues long: tRNA-specific 2-thiouridylase MnmA (372 aa).

ATP contacts are provided by residues 9-16 (GMSGGVDS) and M35. The tract at residues 95-97 (NPD) is interaction with target base in tRNA. C100 functions as the Nucleophile in the catalytic mechanism. C100 and C201 are joined by a disulfide. Residue G124 coordinates ATP. Residues 151 to 153 (KDQ) are interaction with tRNA. The active-site Cysteine persulfide intermediate is C201. Residues 317–318 (RY) form an interaction with tRNA region.

It belongs to the MnmA/TRMU family.

It localises to the cytoplasm. It carries out the reaction S-sulfanyl-L-cysteinyl-[protein] + uridine(34) in tRNA + AH2 + ATP = 2-thiouridine(34) in tRNA + L-cysteinyl-[protein] + A + AMP + diphosphate + H(+). Catalyzes the 2-thiolation of uridine at the wobble position (U34) of tRNA, leading to the formation of s(2)U34. The chain is tRNA-specific 2-thiouridylase MnmA from Herminiimonas arsenicoxydans.